Consider the following 88-residue polypeptide: Snakin-1 (88 aa).

Positions 1–25 (MKLFLLTLLLVTLVITPSLIQTTMA) are cleaved as a signal peptide.

Belongs to the GASA family. In terms of processing, six disulfide bonds may be present. In terms of tissue distribution, expressed in tubers, stems, axillary and young floral buds, sepals, petals, stamens and carpels, but not in roots, stolons, shoot apex meristem or young leaves.

Its subcellular location is the secreted. It localises to the cell wall. Its function is as follows. Has an antimicrobial activity. Causes a rapid aggregation of both Gram-positive and Gram-negative bacteria, but the antimicrobial activity is not correlated with the capacity to aggregate bacteria. This chain is Snakin-1 (SN1), found in Solanum tuberosum (Potato).